The chain runs to 507 residues: MIVLLVSLVLAGCIYYANARRVRRSRLPPGPPGIPLPFIGNMFDMPSESPWLRFLQWGRDYHTDILYLNAGGTEIIILNTLDAITDLLEKRGSMYSGRLESTMVNELMGWEFDLGFITYGERWREERRMFAKEFSEKNIRQFRHAQIKAANQLVRQLIKTPDRWSQHIRHQIAAMSLDIGYGIDLAEDDPWIAATQLANEGLAEASVPGSFWVDSFPALKYLPSWLPGAGFKRKAKVWKEGADHMVNMPYETMKKLTVQGLARPSYASARLQAMDPDGDLEHQEHVIRNTATEVNVGGGDTTVSAVSAFILAMVKYPEVQRQVQAELDALTSKGVVPNYDEEDDSLPYLTACVKEIFRWNQIAPLAIPHRLIKDDVYRGYLIPKNALVYANSWAVLNDPEEYPNPSEFRPERYLSSDGKPDPTVRDPRKAAFGYGRRNCPGIHLAQSTVWIAGATLLSVFNIERPVDGNGKPIDIPATFTTGFFRHPEPFQCRFVPRTQEILKSVSG.

A signal peptide spans 1–19 (MIVLLVSLVLAGCIYYANA). The interval 403-425 (PNPSEFRPERYLSSDGKPDPTVR) is disordered. Over residues 408 to 425 (FRPERYLSSDGKPDPTVR) the composition is skewed to basic and acidic residues. Cys439 contributes to the heme binding site.

Belongs to the cytochrome P450 family. The cofactor is heme.

The catalysed reaction is tryptamine + AH2 + O2 = 4-hydroxytryptamine + A + H2O. It functions in the pathway secondary metabolite biosynthesis. Its function is as follows. Tryptamine 4-monooxygenase; part of the gene cluster that mediates the biosynthesis of psilocybin, a psychotropic tryptamine-derived natural product. The first step in the pathway is the decarboxylation of L-tryptophan to tryptamine by the decarboxylase psiD. PsiD does not decarboxylate phenylalanine, tyrosine, or 5-hydroxy- L -tryptophan (5-HTP). 4-hydroxy-L-tryptophan is accepted as substrate by psiD as well. The cytochrome P450 monooxygenase psiH then converts tryptamine to 4-hydroxytryptamine. The kinase psiK catalyzes the 4-O-phosphorylation step by converting 4-hydroxytryptamine into norbaeocystin. The methyltransferase psiM then catalyzes iterative methyl transfer to the amino group of norbaeocystin to yield psilocybin via a monomethylated intermediate, baeocystin. The sequence is that of Tryptamine 4-monooxygenase from Psilocybe cyanescens.